A 163-amino-acid chain; its full sequence is Globin CTT-Z (163 aa).

The first 16 residues, 1-16 (MKFFAVLALCIVGAIA), serve as a signal peptide directing secretion. The region spanning 18–162 (PLTSDEAALV…VYTAVFQIVT (145 aa)) is the Globin domain. Heme b is bound by residues histidine 76 and histidine 111.

It belongs to the globin family.

The sequence is that of Globin CTT-Z (CTT-Z) from Chironomus thummi piger (Midge).